A 529-amino-acid polypeptide reads, in one-letter code: MLQPQILTARQQQELNKAIIQYIKPIAEEANDGDLIQKLSESLDVPLGSIDDSVIPNYLEKKWSTVLRLQHKIIDLEGEVSNLRTVIDSQQIVPSASASVIGKDKINWLPSSSIKAFKTQSHQLVQSVSIHPALPIILGGCSDGSLIIWNLVNDESLIPEKIIKAHIRGVNTIAWSKKPVDLSGKGSEAKGIAHVMATCSSDLSIKIWDGATFKHIRTLTGHEHTISSIVFSASKPNILYSVSRDKSVKVWDLVNGYCIKTFIGHSDWVRDIDVISVNSNLLQEQSDINPELGDFLVTCSNDQSIRLSHAESGTGLSLSIGHTHVIECVKFLPFHSNYIIDKYIKENESLFPNISPEVLDDPNYTNLLGYKYCISGGRDNSVKLWLLPPPVFRPHRHPLPSQLNNSQGWLIADLVGHQSWVKSLHIHPNGRFVFSGSDDKTIKIWDLSSLNVNGRVKCVKNLIGHEGFVNDIEFASFEITNNIHASKTADDGKTKTEEDRRNELMKSIESKIRCLFISGGVDNCIRLWS.

A coiled-coil region spans residues 68–89 (RLQHKIIDLEGEVSNLRTVIDS). WD repeat units lie at residues 120–159 (QSHQ…SLIP), 165–218 (AHIR…HIRT), 221–261 (GHEH…CIKT), 264–318 (GHSD…GLSL), 321–395 (GHTH…FRPH), 416–455 (GHQS…VNGR), and 496–529 (TEED…RLWS).

The protein belongs to the WD repeat LIS1/nudF family. Self-associates. Interacts with NDL1 and dynein.

The protein localises to the cytoplasm. Its subcellular location is the cytoskeleton. The protein resides in the spindle pole. Functionally, positively regulates the activity of the minus-end directed microtubule motor protein dynein. Plays a central role in positioning the mitotic spindle at the bud neck during cell division. Targets cytoplasmic dynein to microtubule plus ends, thereby promoting dynein-mediated microtubule sliding along the bud cortex and consequently the movement of the mitotic spindle to the bud neck. The sequence is that of Nuclear distribution protein PAC1 from Debaryomyces hansenii (strain ATCC 36239 / CBS 767 / BCRC 21394 / JCM 1990 / NBRC 0083 / IGC 2968) (Yeast).